The following is a 155-amino-acid chain: Ribosomal RNA large subunit methyltransferase H (155 aa).

S-adenosyl-L-methionine-binding positions include Leu-72, Gly-103, and 122–127 (LSDLTL).

The protein belongs to the RNA methyltransferase RlmH family. As to quaternary structure, homodimer.

Its subcellular location is the cytoplasm. The catalysed reaction is pseudouridine(1915) in 23S rRNA + S-adenosyl-L-methionine = N(3)-methylpseudouridine(1915) in 23S rRNA + S-adenosyl-L-homocysteine + H(+). Specifically methylates the pseudouridine at position 1915 (m3Psi1915) in 23S rRNA. The polypeptide is Ribosomal RNA large subunit methyltransferase H (Albidiferax ferrireducens (strain ATCC BAA-621 / DSM 15236 / T118) (Rhodoferax ferrireducens)).